An 89-amino-acid polypeptide reads, in one-letter code: Cell division topological specificity factor (89 aa).

It belongs to the MinE family.

Functionally, prevents the cell division inhibition by proteins MinC and MinD at internal division sites while permitting inhibition at polar sites. This ensures cell division at the proper site by restricting the formation of a division septum at the midpoint of the long axis of the cell. The polypeptide is Cell division topological specificity factor (Klebsiella pneumoniae (strain 342)).